Reading from the N-terminus, the 227-residue chain is Urease accessory protein UreF (227 aa).

This sequence belongs to the UreF family. As to quaternary structure, ureD, UreF and UreG form a complex that acts as a GTP-hydrolysis-dependent molecular chaperone, activating the urease apoprotein by helping to assemble the nickel containing metallocenter of UreC. The UreE protein probably delivers the nickel.

It is found in the cytoplasm. Required for maturation of urease via the functional incorporation of the urease nickel metallocenter. The chain is Urease accessory protein UreF from Shewanella halifaxensis (strain HAW-EB4).